The chain runs to 172 residues: NADH-quinone oxidoreductase subunit B (172 aa).

Cys-46, Cys-47, Cys-111, and Cys-141 together coordinate [4Fe-4S] cluster.

This sequence belongs to the complex I 20 kDa subunit family. In terms of assembly, NDH-1 is composed of 14 different subunits. Subunits NuoB, C, D, E, F, and G constitute the peripheral sector of the complex. [4Fe-4S] cluster serves as cofactor.

The protein localises to the cell membrane. The enzyme catalyses a quinone + NADH + 5 H(+)(in) = a quinol + NAD(+) + 4 H(+)(out). In terms of biological role, NDH-1 shuttles electrons from NADH, via FMN and iron-sulfur (Fe-S) centers, to quinones in the respiratory chain. The immediate electron acceptor for the enzyme in this species is believed to be a menaquinone. Couples the redox reaction to proton translocation (for every two electrons transferred, four hydrogen ions are translocated across the cytoplasmic membrane), and thus conserves the redox energy in a proton gradient. In Bacillus anthracis (strain A0248), this protein is NADH-quinone oxidoreductase subunit B.